The primary structure comprises 92 residues: Large ribosomal subunit protein bL28 (92 aa).

The protein belongs to the bacterial ribosomal protein bL28 family.

This Borrelia garinii subsp. bavariensis (strain ATCC BAA-2496 / DSM 23469 / PBi) (Borreliella bavariensis) protein is Large ribosomal subunit protein bL28.